The sequence spans 209 residues: Ribosomal RNA large subunit methyltransferase E (209 aa).

Positions 63, 65, 83, 99, and 124 each coordinate S-adenosyl-L-methionine. Lysine 164 (proton acceptor) is an active-site residue.

This sequence belongs to the class I-like SAM-binding methyltransferase superfamily. RNA methyltransferase RlmE family.

It is found in the cytoplasm. The enzyme catalyses uridine(2552) in 23S rRNA + S-adenosyl-L-methionine = 2'-O-methyluridine(2552) in 23S rRNA + S-adenosyl-L-homocysteine + H(+). In terms of biological role, specifically methylates the uridine in position 2552 of 23S rRNA at the 2'-O position of the ribose in the fully assembled 50S ribosomal subunit. The polypeptide is Ribosomal RNA large subunit methyltransferase E (Pseudoalteromonas translucida (strain TAC 125)).